Consider the following 664-residue polypeptide: Macoilin (664 aa).

Helical transmembrane passes span 28–48 (TFLYLKFLVVWALVLLADFVL), 75–95 (AFSVFFVCVAFTSNIICLLFI), 120–140 (VCLPTVSLWILFVYIEAAIRF), and 154–174 (FAAHCIGYPVVTLGFGFKSYV). The segment covering 253-265 (REKGKEKDKDAKK) has biased composition (basic and acidic residues). The disordered stretch occupies residues 253 to 274 (REKGKEKDKDAKKHNLGINNNN). Position 305 is a phosphoserine (serine 305). Over residues 320–348 (KNYKNASGVVNSSPRSHSATNGSIPSSSS) the composition is skewed to polar residues. The interval 320–375 (KNYKNASGVVNSSPRSHSATNGSIPSSSSKNEKKQKCTSKGPSAHKDLMENCIPNN) is disordered. The N-linked (GlcNAc...) asparagine glycan is linked to asparagine 324. Phosphoserine is present on serine 332. 2 N-linked (GlcNAc...) asparagine glycosylation sites follow: asparagine 340 and asparagine 452. Positions 630–664 (TSPLSPVSPHYSSKFVETSPSGLDPNASVYQPLKK) are disordered. Phosphoserine occurs at positions 631 and 634. An N-linked (GlcNAc...) asparagine glycan is attached at asparagine 655.

It belongs to the macoilin family. In terms of tissue distribution, strong expression in whole nervous system up to 12.5 dpc. Highly expressed in all neuronal differentiation fields from 14.5 dpc to birth, with highest expression in the telencephalic cortical plate and mitral cells in the olfactory bulb, and lower expression in neuronal progenitor zones. Progressively decreased expression in fields of neuron precursor proliferation from 14.5 dpc and virtually undetectable there by 17.5 dpc. No significant expression detected outside the nervous system. After birth, significant expression remains in the cerebellum, olfactory bulb and hippocampus.

It localises to the rough endoplasmic reticulum membrane. Its subcellular location is the nucleus membrane. Plays a role in the regulation of neuronal activity. This chain is Macoilin (Maco1), found in Mus musculus (Mouse).